The primary structure comprises 394 residues: Thioredoxin-interacting protein (394 aa).

Lysine 212 participates in a covalent cross-link: Glycyl lysine isopeptide (Lys-Gly) (interchain with G-Cter in ubiquitin). Serine 361 is subject to Phosphoserine.

Belongs to the arrestin family. Homodimer; disulfide-linked. Interacts with TXN/thioredoxin through its redox-active site. Interacts with transcriptional repressors ZBTB16, ZBTB32 and HDAC1. Interacts with DDIT4. Ubiquitinated; undergoes heterotypic 'Lys-48'-/'Lys-63'-branched polyubiquitination catalyzed by ITCH and UBR5 resulting in proteasomal degradation. Deubiquitinated by USP5, leading to TXNIP stabilization.

Its subcellular location is the cytoplasm. In terms of biological role, may act as an oxidative stress mediator by inhibiting thioredoxin activity or by limiting its bioavailability. Interacts with COPS5 and restores COPS5-induced suppression of CDKN1B stability, blocking the COPS5-mediated translocation of CDKN1B from the nucleus to the cytoplasm. Functions as a transcriptional repressor, possibly by acting as a bridge molecule between transcription factors and corepressor complexes, and over-expression will induce G0/G1 cell cycle arrest. Required for the maturation of natural killer cells. Acts as a suppressor of tumor cell growth. Inhibits the proteasomal degradation of DDIT4, and thereby contributes to the inhibition of the mammalian target of rapamycin complex 1 (mTORC1). This chain is Thioredoxin-interacting protein (Txnip), found in Rattus norvegicus (Rat).